We begin with the raw amino-acid sequence, 209 residues long: Cyclin-dependent kinase inhibitor 2 (209 aa).

Positions methionine 1–aspartate 32 are required for nuclear localization.

Belongs to the CDI family. ICK/KRP subfamily. In terms of assembly, specifically interacts with CDKA-1, but not with CDKB1-1. Phosphorylated.

It is found in the nucleus. Its subcellular location is the nucleoplasm. In terms of biological role, binds and inhibits CYCD2-1/CDKA-1 complex kinase activity. Regulates cell division which is crucial for plant growth, development and morphogenesis. May regulate early lateral root initiation by blocking the G1/S phase transition. Controls the mitosis-to-endocycle transition and the onset of the endoreduplication cycle during leaf development through inhibition of mitotic CDKA-1 kinase complexes. Specifically targets CDKA-1. The protein is Cyclin-dependent kinase inhibitor 2 (KRP2) of Arabidopsis thaliana (Mouse-ear cress).